The primary structure comprises 357 residues: O-methyltransferase pgmB (357 aa).

D206 is a binding site for S-adenosyl-L-methionine. H256 serves as the catalytic Proton acceptor.

It belongs to the class I-like SAM-binding methyltransferase superfamily. Cation-independent O-methyltransferase family.

Its pathway is pigment biosynthesis. It participates in secondary metabolite biosynthesis. Its function is as follows. O-methyltransferase; part of the gene cluster that mediates the biosynthesis of pleosporalin A, ascomycone A, as well as a third cryptic naphthoquinone derived pigment, all responsible for the coloration of conidia. Specifically methylates position C-6 of the pgmA product 3-acetonyl-1,6,8-trihydroxy-2-naphthaldehyde to yield fusarubinaldehyde. The pathway begins with the biosynthesis of the cyclized heptaketide 3-acetonyl-1,6,8-trihydroxy-2-naphthaldehyde by the NR-PKS pgmA. The C-6 hydroxyl group is further methylated by the O-methyltransferase pgmB to yield fusarubinaldehyde which is in turn oxidized by the cytochrome P450 monooxygenase pgmC at C-9. The C-1 hydroxyl group is then methylated spontaneously. Although pgmE, pgmD and pgmH are essential for the production of pleosporalin A, it is not the case for the 2 other final products and it remains difficult to assign a specific function to each enzyme. PgmF and pgmG seem not to be involved in pigment biosynthesis although they were regulated by the cluster-specific transcription factor pgmR. The polypeptide is O-methyltransferase pgmB (Aspergillus terreus (strain NIH 2624 / FGSC A1156)).